Reading from the N-terminus, the 292-residue chain is ATP synthase gamma chain (292 aa).

Belongs to the ATPase gamma chain family. As to quaternary structure, F-type ATPases have 2 components, CF(1) - the catalytic core - and CF(0) - the membrane proton channel. CF(1) has five subunits: alpha(3), beta(3), gamma(1), delta(1), epsilon(1). CF(0) has three main subunits: a, b and c.

The protein resides in the cell membrane. Functionally, produces ATP from ADP in the presence of a proton gradient across the membrane. The gamma chain is believed to be important in regulating ATPase activity and the flow of protons through the CF(0) complex. The sequence is that of ATP synthase gamma chain from Streptococcus thermophilus (strain CNRZ 1066).